Reading from the N-terminus, the 103-residue chain is NADH-quinone oxidoreductase subunit K (103 aa).

3 helical membrane passes run 4–24 (LTSY…GVIA), 28–48 (IFVI…FLIT), and 64–84 (MVIS…ILLF).

This sequence belongs to the complex I subunit 4L family. In terms of assembly, NDH-1 is composed of 14 different subunits. Subunits NuoA, H, J, K, L, M, N constitute the membrane sector of the complex.

The protein resides in the cell inner membrane. It carries out the reaction a quinone + NADH + 5 H(+)(in) = a quinol + NAD(+) + 4 H(+)(out). Functionally, NDH-1 shuttles electrons from NADH, via FMN and iron-sulfur (Fe-S) centers, to quinones in the respiratory chain. The immediate electron acceptor for the enzyme in this species is believed to be ubiquinone. Couples the redox reaction to proton translocation (for every two electrons transferred, four hydrogen ions are translocated across the cytoplasmic membrane), and thus conserves the redox energy in a proton gradient. The protein is NADH-quinone oxidoreductase subunit K of Aliarcobacter butzleri (strain RM4018) (Arcobacter butzleri).